The chain runs to 128 residues: Disintegrin lebein-2-alpha (128 aa).

Positions 1 to 20 are cleaved as a signal peptide; sequence MIQVLLVTICLAVFPFHGSS. A propeptide spanning residues 21–46 is cleaved from the precursor; the sequence is IILESGNVNDYEVVYPKKVTLLPTGA. The region spanning 47 to 111 is the Disintegrin domain; it reads MNSANPCCDP…SDCPRNPWKS (65 aa). 4 disulfide bridges follow: cysteine 53–cysteine 76, cysteine 67–cysteine 73, cysteine 72–cysteine 97, and cysteine 85–cysteine 104. The Cell attachment site; atypical (MLD) signature appears at 89-91; it reads MLD. Positions 112-128 are excised as a propeptide; that stretch reads EEDEMKWSATAKGSVLM.

Belongs to the disintegrin family. Dimeric disintegrin subfamily. As to quaternary structure, heterodimer with subunit beta; disulfide-linked. Expressed by the venom gland.

The protein resides in the secreted. Inhibits ADP-induced human platelet aggregation. Antagonist of alpha-IIb/beta-3 (ITGA2B/ITGB3). Also avidly binds to the laminin-binding beta-1 integrins (alpha-3/beta-1 (ITGA3/ITGB1), alpha-6/beta-1 (ITGA6/ITGB1), and alpha-7/beta-1 (ITGA7/ITGB1)) in an RGD-independent manner. This Macrovipera lebetinus (Levantine viper) protein is Disintegrin lebein-2-alpha.